A 477-amino-acid polypeptide reads, in one-letter code: UDP-N-acetylmuramate--L-alanine ligase (477 aa).

122-128 (GTHGKTT) lines the ATP pocket.

This sequence belongs to the MurCDEF family.

It localises to the cytoplasm. The catalysed reaction is UDP-N-acetyl-alpha-D-muramate + L-alanine + ATP = UDP-N-acetyl-alpha-D-muramoyl-L-alanine + ADP + phosphate + H(+). The protein operates within cell wall biogenesis; peptidoglycan biosynthesis. Functionally, cell wall formation. The sequence is that of UDP-N-acetylmuramate--L-alanine ligase from Xanthomonas campestris pv. campestris (strain 8004).